The primary structure comprises 299 residues: Cold shock protein 1 (299 aa).

Residue alanine 2 is modified to N-acetylalanine. In terms of domain architecture, CSD spans 12 to 76; the sequence is TGKVNWFNAS…GKTKAVNVTA (65 aa). Residues 76-97 are disordered; sequence APGGGSLKKENNSRGNGARRGG. 7 consecutive CCHC-type zinc fingers follow at residues 100 to 117, 132 to 149, 164 to 181, 198 to 215, 230 to 247, 253 to 270, and 280 to 297; these read SGCY…DCGI, EGCY…DCTS, DGCY…DCTQ, GTCY…DCAT, RGCY…DCDQ, and NACY…ECSS.

Belongs to the cold shock protein (CSP) family. As to expression, mostly expressed in shoot apices and siliques, and, to a lower extent, in roots, cotyledons, stems, shoots, leaves, floral buds and flowers.

The protein localises to the nucleus. It localises to the cytoplasm. Functionally, chaperone that binds to RNA, single- (ssDNA) and double-stranded (dsDNA) DNA, and unwinds nucleic acid duplex. Exhibits a DNA melting activity. May be involved in cold resistance. Prevents seed germination under dehydration or salt stress conditions. This Arabidopsis thaliana (Mouse-ear cress) protein is Cold shock protein 1 (CSP1).